A 406-amino-acid polypeptide reads, in one-letter code: Tryptophan synthase beta chain (406 aa).

N6-(pyridoxal phosphate)lysine is present on lysine 99.

Belongs to the TrpB family. In terms of assembly, tetramer of two alpha and two beta chains. Pyridoxal 5'-phosphate serves as cofactor.

It catalyses the reaction (1S,2R)-1-C-(indol-3-yl)glycerol 3-phosphate + L-serine = D-glyceraldehyde 3-phosphate + L-tryptophan + H2O. It functions in the pathway amino-acid biosynthesis; L-tryptophan biosynthesis; L-tryptophan from chorismate: step 5/5. Its function is as follows. The beta subunit is responsible for the synthesis of L-tryptophan from indole and L-serine. Essential for production of nod factors and establishment of symbiosis. The chain is Tryptophan synthase beta chain from Rhizobium etli (strain ATCC 51251 / DSM 11541 / JCM 21823 / NBRC 15573 / CFN 42).